A 591-amino-acid chain; its full sequence is Serine/threonine-protein kinase PAK 4 (591 aa).

One can recognise a CRIB domain in the interval 11 to 24; the sequence is ISAPSNFEHRVHTG. The tract at residues 25-320 is linker; that stretch reads FDQHEQKFTG…VVDPGDPRSY (296 aa). Phosphoserine is present on Ser41. The residue at position 78 (Lys78) is an N6-methyllysine. Residues 95-301 form a disordered region; sequence TRSNSLRRDS…PQREPQRVSH (207 aa). Residues Ser104 and Ser148 each carry the phosphoserine modification. Positions 149–164 are enriched in basic and acidic residues; sequence GDRRRAGPEKRPKSSR. Phosphoserine occurs at positions 167 and 181. Thr187 carries the phosphothreonine modification. Positions 191–202 are enriched in low complexity; sequence AGLASGAKLAAG. Ser195 is modified (phosphoserine). Phosphothreonine is present on Thr207. Positions 242-260 are enriched in low complexity; sequence SSSSSSRPPTRARGAPSPG. 2 positions are modified to phosphoserine: Ser258 and Ser267. Residues 271–290 are compositionally biased toward pro residues; that stretch reads LAPPACTPAAPAVPGPPGPR. A Phosphoserine modification is found at Ser291. Basic and acidic residues predominate over residues 292-301; that stretch reads PQREPQRVSH. The segment at 298 to 323 is GEF-interaction domain (GID); that stretch reads RVSHEQFRAALQLVVDPGDPRSYLDN. One can recognise a Protein kinase domain in the interval 321–572; that stretch reads LDNFIKIGEG…AAELLKHPFL (252 aa). ATP is bound by residues 327-335, Lys350, and 396-398; these read IGEGSTGIV and EFL. Residue Asp440 is the Proton acceptor of the active site. 458-460 contacts ATP; that stretch reads DFG. At Ser474 the chain carries Phosphoserine; by autocatalysis.

This sequence belongs to the protein kinase superfamily. STE Ser/Thr protein kinase family. STE20 subfamily. As to quaternary structure, interacts with FGFR2 and GRB2. Interacts tightly with GTP-bound but not GDP-bound CDC42/p21 and weakly with RAC1. Interacts with INKA1. Interacts with SH3RF2. Interacts with RHOU and PAXI; the PAK4-RHOU complex protects RHOU from ubiquitination and acts as a scaffold to suppport paxillin/PAXI phosphorylation. In terms of processing, autophosphorylated on serine residues when activated by CDC42/p21. Phosphorylated on tyrosine residues upon stimulation of FGFR2. Methylated by SETD6. Polyubiquitinated, leading to its proteasomal degradation. Highest expression in prostate, testis and colon.

The protein resides in the cytoplasm. The catalysed reaction is L-seryl-[protein] + ATP = O-phospho-L-seryl-[protein] + ADP + H(+). It carries out the reaction L-threonyl-[protein] + ATP = O-phospho-L-threonyl-[protein] + ADP + H(+). Its activity is regulated as follows. Inhibited by INKA1; which inhibits the serine/threonine-protein kinase activity by binding PAK4 in a substrate-like manner. Serine/threonine-protein kinase that plays a role in a variety of different signaling pathways including cytoskeleton regulation, cell adhesion turnover, cell migration, growth, proliferation or cell survival. Activation by various effectors including growth factor receptors or active CDC42 and RAC1 results in a conformational change and a subsequent autophosphorylation on several serine and/or threonine residues. Phosphorylates and inactivates the protein phosphatase SSH1, leading to increased inhibitory phosphorylation of the actin binding/depolymerizing factor cofilin. Decreased cofilin activity may lead to stabilization of actin filaments. Phosphorylates LIMK1, a kinase that also inhibits the activity of cofilin. Phosphorylates integrin beta5/ITGB5 and thus regulates cell motility. Phosphorylates ARHGEF2 and activates the downstream target RHOA that plays a role in the regulation of assembly of focal adhesions and actin stress fibers. Stimulates cell survival by phosphorylating the BCL2 antagonist of cell death BAD. Alternatively, inhibits apoptosis by preventing caspase-8 binding to death domain receptors in a kinase independent manner. Plays a role in cell-cycle progression by controlling levels of the cell-cycle regulatory protein CDKN1A and by phosphorylating RAN. Promotes kinase-independent stabilization of RHOU, thereby contributing to focal adhesion disassembly during cell migration. The sequence is that of Serine/threonine-protein kinase PAK 4 from Homo sapiens (Human).